We begin with the raw amino-acid sequence, 247 residues long: 1-(5-phosphoribosyl)-5-[(5-phosphoribosylamino)methylideneamino] imidazole-4-carboxamide isomerase 1 (247 aa).

The active-site Proton acceptor is the Glu8. The active-site Proton donor is Asp128.

This sequence belongs to the HisA/HisF family.

It is found in the cytoplasm. The enzyme catalyses 1-(5-phospho-beta-D-ribosyl)-5-[(5-phospho-beta-D-ribosylamino)methylideneamino]imidazole-4-carboxamide = 5-[(5-phospho-1-deoxy-D-ribulos-1-ylimino)methylamino]-1-(5-phospho-beta-D-ribosyl)imidazole-4-carboxamide. It participates in amino-acid biosynthesis; L-histidine biosynthesis; L-histidine from 5-phospho-alpha-D-ribose 1-diphosphate: step 4/9. In Ruegeria sp. (strain TM1040) (Silicibacter sp.), this protein is 1-(5-phosphoribosyl)-5-[(5-phosphoribosylamino)methylideneamino] imidazole-4-carboxamide isomerase 1.